A 368-amino-acid polypeptide reads, in one-letter code: Cytochrome b (368 aa).

The next 4 membrane-spanning stretches (helical) occupy residues 32 to 52, 76 to 98, 112 to 132, and 174 to 194; these read FGFLVAMTFVLQIITGITLAF, WEFRMLHATTASFVFLCILIHMT, AWMSGLVLYLLTIATAFLGYV, and FFVLHFILPFIGCIIIVLHIF. His82 and His96 together coordinate heme b. His178 and His192 together coordinate heme b. His197 lines the a ubiquinone pocket. Helical transmembrane passes span 219–239, 285–305, 323–343, and 347–367; these read MLMTDAKCLSYLIGLIFLQAA, GLLVFMSSLINLGLLSEIRAL, GWVIIWVYSMIFLIIIGSAIP, and YILYGRLATILYLTTGLVLCL.

This sequence belongs to the cytochrome b family. The main subunits of complex b-c1 are: cytochrome b, cytochrome c1 and the Rieske protein. Requires heme b as cofactor.

The protein localises to the mitochondrion inner membrane. Its function is as follows. Component of the ubiquinol-cytochrome c reductase complex (complex III or cytochrome b-c1 complex) that is part of the mitochondrial respiratory chain. The b-c1 complex mediates electron transfer from ubiquinol to cytochrome c. Contributes to the generation of a proton gradient across the mitochondrial membrane that is then used for ATP synthesis. The polypeptide is Cytochrome b (MT-CYB) (Toxoplasma gondii).